Consider the following 864-residue polypeptide: Leucine--tRNA ligase (864 aa).

A 'HIGH' region motif is present at residues P42–H52. The short motif at K621–S625 is the 'KMSKS' region element. K624 provides a ligand contact to ATP.

This sequence belongs to the class-I aminoacyl-tRNA synthetase family.

The protein resides in the cytoplasm. The catalysed reaction is tRNA(Leu) + L-leucine + ATP = L-leucyl-tRNA(Leu) + AMP + diphosphate. The protein is Leucine--tRNA ligase of Alkalilimnicola ehrlichii (strain ATCC BAA-1101 / DSM 17681 / MLHE-1).